Reading from the N-terminus, the 316-residue chain is tRNA dimethylallyltransferase (316 aa).

Gly17–Thr24 contributes to the ATP binding site. Thr19–Thr24 serves as a coordination point for substrate. Interaction with substrate tRNA regions lie at residues Asp42–Leu45, Gln166–Arg170, Arg247–Arg252, and Lys280–Arg287.

Belongs to the IPP transferase family. In terms of assembly, monomer. Requires Mg(2+) as cofactor.

The catalysed reaction is adenosine(37) in tRNA + dimethylallyl diphosphate = N(6)-dimethylallyladenosine(37) in tRNA + diphosphate. Catalyzes the transfer of a dimethylallyl group onto the adenine at position 37 in tRNAs that read codons beginning with uridine, leading to the formation of N6-(dimethylallyl)adenosine (i(6)A). This chain is tRNA dimethylallyltransferase, found in Shigella dysenteriae serotype 1 (strain Sd197).